Here is a 757-residue protein sequence, read N- to C-terminus: Protein transport protein SEC23-2 (757 aa).

Residues cysteine 56, cysteine 61, cysteine 80, and cysteine 83 each coordinate Zn(2+).

This sequence belongs to the SEC23/SEC24 family. SEC23 subfamily. In terms of assembly, the COPII coat is composed of at least 5 proteins: the SEC23/24 complex, the SEC13/31 complex, and the protein SAR1.

It localises to the cytoplasm. Its subcellular location is the cytoplasmic vesicle. It is found in the COPII-coated vesicle membrane. The protein resides in the endoplasmic reticulum membrane. The protein localises to the golgi apparatus membrane. Its function is as follows. Component of the coat protein complex II (COPII) which promotes the formation of transport vesicles from the endoplasmic reticulum (ER). The coat has two main functions, the physical deformation of the endoplasmic reticulum membrane into vesicles and the selection of cargo molecules. This is Protein transport protein SEC23-2 (SEC232) from Candida glabrata (strain ATCC 2001 / BCRC 20586 / JCM 3761 / NBRC 0622 / NRRL Y-65 / CBS 138) (Yeast).